The primary structure comprises 1556 residues: Bromodomain adjacent to zinc finger domain protein 1A (1556 aa).

Residues 1 to 128 form a required for interaction with the CHRAC1-POLE3 heterodimer. Required for interaction with the CHRAC1-POLE3 heterodimer region; it reads MPLLHRKPFV…EETVEVIRNN (128 aa). A required for interaction with NCOR1 region spans residues 1-133; the sequence is MPLLHRKPFV…VIRNNGARLQ (133 aa). The WAC domain maps to 22–128; the sequence is EEVFYCKVTN…EETVEVIRNN (107 aa). Ser270 is modified (phosphoserine). The stretch at 306 to 397 forms a coiled coil; the sequence is KERDKLLKQE…YVEYLKQWSK (92 aa). A DDT domain is found at 422-487; that stretch reads PEIFGDALMV…LTAIFQAIAE (66 aa). A coiled-coil region spans residues 634–709; that stretch reads IEDYVDILRQ…DISIGEEERE (76 aa). Over residues 662 to 695 the composition is skewed to basic and acidic residues; it reads EAAARIRKRKEEKLKEQEQKMKEKQEKLKEDEQR. 3 disordered regions span residues 662–754, 841–877, and 941–966; these read EAAA…NGFK, PSSF…GPRD, and FHFS…AYDP. Residues 667–933 are required for interaction with SMARCA5 and formation of the CHRAC ISWI chromatin remodeling complex; the sequence is IRKRKEEKLK…QEKSRICAQL (267 aa). Ser702 is subject to Phosphoserine. Positions 703–713 are enriched in acidic residues; sequence IGEEEREDFDT. The segment covering 715-726 has biased composition (basic and acidic residues); sequence IESKDTEQKELD. Residues 727–736 are compositionally biased toward acidic residues; sequence QDMVTEDEDD. Thr731 carries the phosphothreonine modification. Polar residues-rich tracts occupy residues 842-872 and 951-965; these read SSFQ…SNID and SKPT…NAYD. Lys952 participates in a covalent cross-link: Glycyl lysine isopeptide (Lys-Gly) (interchain with G-Cter in SUMO2). Residues Ser960 and Ser961 each carry the phosphoserine modification. The PHD-type zinc finger occupies 1148 to 1198; that stretch reads NARCKICRKKGDAENMVLCDGCDRGHHTYCVRPKLKTVPEGDWFCPECRPK. 2 disordered regions span residues 1202–1376 and 1399–1431; these read RRLS…NFPN and LQES…RQGG. Positions 1213-1258 are enriched in acidic residues; sequence ESDEDVEDSMGGEDDEVDGDEEEGQSEEEEYEVEQDEDDSQEEEEV. Positions 1262 to 1276 are enriched in basic residues; the sequence is KRGRPQVRLPVKTRG. A compositionally biased stretch (polar residues) spans 1277 to 1312; the sequence is KLSSSFSSRGQQQEPGRYPSRSQQSTPKTTVSSKTG. Phosphoserine occurs at positions 1281, 1320, 1339, 1353, 1363, 1371, 1402, 1413, and 1417. The segment covering 1363-1374 has biased composition (polar residues); the sequence is SANNTPENSPNF. In terms of domain architecture, Bromo spans 1430 to 1533; that stretch reads GGVHELSAFE…AFFHIQAQKL (104 aa). A Phosphothreonine modification is found at Thr1547.

Belongs to the WAL family. Component of the ACF-1 ISWI chromatin remodeling complex at least composed of SMARCA1 and BAZ1A, which regulates the spacing of histone octamers on the DNA template to facilitate access to DNA. Within the ACF-1 ISWI chromatin remodeling complex interacts with SMARCA1; the interaction is direct. Component of the ACF-5 ISWI chromatin remodeling complex (also called the ACF complex) at least composed of BAZ1A and SMARCA5/SNF2H, which regulates the spacing of histone octamers on the DNA template to facilitate access to DNA. Within the ACF-5 ISWI chromatin remodeling complex interacts with SMARCA5/SNF2H; the interaction is direct. Component of the CHRAC ISWI chromatin remodeling complex at least composed of SMARCA5/SNF2H, BAZ1A/ACF1, CHRAC1 and POLE3; the complex preferentially binds DNA through the CHRAC1-POLE3 heterodimer and possesses ATP-dependent nucleosome-remodeling activity. Within the complex interacts (via N-terminus) with POLE3-CHRAC1 heterodimer; the interaction is direct and is required for the complex to preferentially bind to DNA. Within the complex interacts with SMARCA5/SNF2H; the interaction is direct and promotes the interaction with the POLE3-CHRAC1 heterodimer. Interacts with NCOR1 (via its RD1 domain); the interaction corepresses a number of NCOR1-regulated genes. As to expression, highly expressed in testis and at low or undetectable levels in other tissues analyzed.

It localises to the nucleus. In terms of biological role, regulatory subunit of the ATP-dependent ACF-1 and ACF-5 ISWI chromatin remodeling complexes, which form ordered nucleosome arrays on chromatin and slide edge- and center-positioned histone octamers away from their original location on the DNA template to facilitate access to DNA during DNA-templated processes such as DNA replication, transcription, and repair. Both complexes regulate the spacing of nucleosomes along the chromatin and have the ability to slide mononucleosomes to the center of a DNA template in an ATP-dependent manner. The ACF-1 ISWI chromatin remodeling complex has a lower ATP hydrolysis rate than the ACF-5 ISWI chromatin remodeling complex. Has a role in sensing the length of DNA which flank nucleosomes, which modulates the nucleosome spacing activity of the ACF-5 ISWI chromatin remodeling complex. Involved in DNA replication and together with SMARCA5/SNF2H is required for replication of pericentric heterochromatin in S-phase. May have a role in nuclear receptor-mediated transcription repression. In Homo sapiens (Human), this protein is Bromodomain adjacent to zinc finger domain protein 1A (BAZ1A).